The following is a 197-amino-acid chain: Phosphoheptose isomerase (197 aa).

Positions 34–196 constitute an SIS domain; it reads MVHCLLGGNK…DRTLFPQDEQ (163 aa). 49–51 contacts substrate; that stretch reads NGG. Zn(2+) is bound by residues H58 and E62. Substrate contacts are provided by residues E62, 91-92, 117-119, S122, and Q172; these read ND and STS. 2 residues coordinate Zn(2+): Q172 and H180.

The protein belongs to the SIS family. GmhA subfamily. As to quaternary structure, homotetramer. It depends on Zn(2+) as a cofactor.

It localises to the cytoplasm. It catalyses the reaction 2 D-sedoheptulose 7-phosphate = D-glycero-alpha-D-manno-heptose 7-phosphate + D-glycero-beta-D-manno-heptose 7-phosphate. It participates in carbohydrate biosynthesis; D-glycero-D-manno-heptose 7-phosphate biosynthesis; D-glycero-alpha-D-manno-heptose 7-phosphate and D-glycero-beta-D-manno-heptose 7-phosphate from sedoheptulose 7-phosphate: step 1/1. Catalyzes the isomerization of sedoheptulose 7-phosphate in D-glycero-D-manno-heptose 7-phosphate. In Shewanella sediminis (strain HAW-EB3), this protein is Phosphoheptose isomerase.